We begin with the raw amino-acid sequence, 313 residues long: UPF0252 protein AF_0384 (313 aa).

This sequence belongs to the UPF0252 family.

The chain is UPF0252 protein AF_0384 from Archaeoglobus fulgidus (strain ATCC 49558 / DSM 4304 / JCM 9628 / NBRC 100126 / VC-16).